The primary structure comprises 420 residues: Probable pectate lyase C (420 aa).

An N-terminal signal peptide occupies residues 1 to 20 (MKLSEPLLVSLAAFSQAVTA). Residues N49, N165, and N202 are each glycosylated (N-linked (GlcNAc...) asparagine). The active site involves R205. Residues 262–297 (NANFHGYVQNNYYDPDKDGQLDGFELGVSSSNYGGM) enclose the EF-hand domain. Ca(2+) is bound by residues D275, D277, D279, Q281, and E286. Residues 358-396 (TMGGPGTLNGGTPAKDTDGDGIPDEAEKQLGTDPNTNDS) form a disordered region. N-linked (GlcNAc...) asparagine glycosylation occurs at N394.

It belongs to the polysaccharide lyase 1 family. Requires Ca(2+) as cofactor.

The protein localises to the secreted. It carries out the reaction Eliminative cleavage of (1-&gt;4)-alpha-D-galacturonan to give oligosaccharides with 4-deoxy-alpha-D-galact-4-enuronosyl groups at their non-reducing ends.. In terms of biological role, pectinolytic enzyme consist of four classes of enzymes: pectin lyase, polygalacturonase, pectin methylesterase and rhamnogalacturonase. Among pectinolytic enzymes, pectin lyase is the most important in depolymerization of pectin, since it cleaves internal glycosidic bonds of highly methylated pectins. Favors pectate, the anion, over pectin, the methyl ester. This Aspergillus fumigatus (strain ATCC MYA-4609 / CBS 101355 / FGSC A1100 / Af293) (Neosartorya fumigata) protein is Probable pectate lyase C (plyC).